The chain runs to 137 residues: Structural protein A137R (137 aa).

Belongs to the asfivirus A137R family. Interacts with host TBK1.

It is found in the virion. Its subcellular location is the host cytoplasm. Plays a role in the inhibition of the host innate immune response. Mechanistically, promotes the autophagy-mediated lysosomal degradation of host TBK1 and affects IRF3 nuclear translocation to block type I IFN production. The sequence is that of Structural protein A137R from African swine fever virus (isolate Warthog/Namibia/Wart80/1980) (ASFV).